A 442-amino-acid chain; its full sequence is Methionine aminopeptidase 2-1 (442 aa).

The disordered stretch occupies residues 1–92 (MAAQASEELE…ISELFPNNQY (92 aa)). Positions 15-25 (NGQNGHAQEQV) are enriched in polar residues. Residues 30–47 (EAADNDDSEDDEKEEEGG) show a composition bias toward acidic residues. Basic residues predominate over residues 56-72 (AKKKKKRKPKKKKKGGA). Residue H195 coordinates substrate. Residues D215, D226, and H295 each coordinate a divalent metal cation. A substrate-binding site is contributed by H303. E328 and E423 together coordinate a divalent metal cation.

It belongs to the peptidase M24A family. Methionine aminopeptidase eukaryotic type 2 subfamily. Co(2+) serves as cofactor. It depends on Zn(2+) as a cofactor. The cofactor is Mn(2+). Fe(2+) is required as a cofactor.

The protein localises to the cytoplasm. It catalyses the reaction Release of N-terminal amino acids, preferentially methionine, from peptides and arylamides.. Its function is as follows. Cotranslationally removes the N-terminal methionine from nascent proteins. The N-terminal methionine is often cleaved when the second residue in the primary sequence is small and uncharged (Met-Ala-, Cys, Gly, Pro, Ser, Thr, or Val). This chain is Methionine aminopeptidase 2-1, found in Talaromyces marneffei (strain ATCC 18224 / CBS 334.59 / QM 7333) (Penicillium marneffei).